A 119-amino-acid polypeptide reads, in one-letter code: MIVGHGIDLQEMEAIESARIKHQGFPKKILTEKEFERYQSLSGRRQLEYLAGRWSAKEALTKALGTGIGKIGFHDIEILNTSKGVPYVTKSPFDGNIWLSISHSGNFVQASVILEEKDD.

Residues Asp8 and Glu58 each coordinate Mg(2+).

The protein belongs to the P-Pant transferase superfamily. AcpS family. Mg(2+) is required as a cofactor.

The protein resides in the cytoplasm. It catalyses the reaction apo-[ACP] + CoA = holo-[ACP] + adenosine 3',5'-bisphosphate + H(+). Functionally, transfers the 4'-phosphopantetheine moiety from coenzyme A to a Ser of acyl-carrier-protein. The protein is Holo-[acyl-carrier-protein] synthase of Streptococcus suis (strain 05ZYH33).